The primary structure comprises 427 residues: Histidine--tRNA ligase (427 aa).

The protein belongs to the class-II aminoacyl-tRNA synthetase family. As to quaternary structure, homodimer.

It is found in the cytoplasm. The enzyme catalyses tRNA(His) + L-histidine + ATP = L-histidyl-tRNA(His) + AMP + diphosphate + H(+). This chain is Histidine--tRNA ligase, found in Lacticaseibacillus casei (strain BL23) (Lactobacillus casei).